Reading from the N-terminus, the 194-residue chain is MKRERLMSINKEKAEAAIYQFLEAIGENPNREGLLDTPKRVAKMYAEMFLGLGKDPKEEFTAVFKEHHEDVVIVKDISFYSICEHHLVPFYGKAHIAYLPSDGRVTGLSKLARAVEVASKRPQLQERLTSQIADALVEALNPKGTLVMVEAEHMCMTMRGIKKPGSKTITTTARGLYKESRAERQEVISLMTKD.

Positions 83, 86, and 155 each coordinate Zn(2+).

It belongs to the GTP cyclohydrolase I family. As to quaternary structure, toroid-shaped homodecamer, composed of two pentamers of five dimers.

It catalyses the reaction GTP + H2O = 7,8-dihydroneopterin 3'-triphosphate + formate + H(+). Its pathway is cofactor biosynthesis; 7,8-dihydroneopterin triphosphate biosynthesis; 7,8-dihydroneopterin triphosphate from GTP: step 1/1. This Streptococcus pyogenes serotype M5 (strain Manfredo) protein is GTP cyclohydrolase 1.